The sequence spans 240 residues: Zein-alpha M6 (240 aa).

Residues 1-21 form the signal peptide; the sequence is MATKIFSLLMLLALSTCVANA.

It belongs to the zein family.

In terms of biological role, zeins are major seed storage proteins. The chain is Zein-alpha M6 from Zea mays (Maize).